The following is a 731-amino-acid chain: 1,4-alpha-glucan branching enzyme GlgB (731 aa).

Residue D408 is the Nucleophile of the active site. The Proton donor role is filled by E461.

Belongs to the glycosyl hydrolase 13 family. GlgB subfamily. Monomer.

It carries out the reaction Transfers a segment of a (1-&gt;4)-alpha-D-glucan chain to a primary hydroxy group in a similar glucan chain.. The protein operates within glycan biosynthesis; glycogen biosynthesis. Catalyzes the formation of the alpha-1,6-glucosidic linkages in glycogen by scission of a 1,4-alpha-linked oligosaccharide from growing alpha-1,4-glucan chains and the subsequent attachment of the oligosaccharide to the alpha-1,6 position. This is 1,4-alpha-glucan branching enzyme GlgB from Corynebacterium glutamicum (strain ATCC 13032 / DSM 20300 / JCM 1318 / BCRC 11384 / CCUG 27702 / LMG 3730 / NBRC 12168 / NCIMB 10025 / NRRL B-2784 / 534).